Reading from the N-terminus, the 117-residue chain is MAKYSSKINKIRTFALSLVFVGFIIMYIGIFFKESVLLSSLFMILGLLSIGLSTVVYFWIGMLSTKAVRVICPGCDKETKVLGVVDMCMHCREPLTLDKGLEGKEFDESYNKKKMSK.

2 helical membrane passes run 13-33 and 41-61; these read TFALSLVFVGFIIMYIGIFFK and LFMILGLLSIGLSTVVYFWIG.

It belongs to the UPF0295 family.

The protein resides in the cell membrane. In Bacillus subtilis (strain 168), this protein is UPF0295 protein YgzB (ygzB).